Here is a 405-residue protein sequence, read N- to C-terminus: Corticosteroid-binding globulin (405 aa).

Positions 1-22 (MPLLLYTCLLWLSTSGLWTVQA) are cleaved as a signal peptide. N-linked (GlcNAc...) asparagine glycans are attached at residues Asn26, Asn31, Asn96, and Asn260. Asn286 lines the cortisol pocket. Residues Asn330 and Asn369 are each glycosylated (N-linked (GlcNAc...) asparagine). Trp393 contributes to the cortisol binding site.

It belongs to the serpin family. Expressed by the liver; secreted in plasma.

It is found in the secreted. Its function is as follows. Major transport protein for glucocorticoids and progestins in the blood of almost all vertebrate species. The protein is Corticosteroid-binding globulin (SERPINA6) of Pongo abelii (Sumatran orangutan).